The sequence spans 370 residues: Pantothenate kinase 3 (370 aa).

The Proton acceptor role is filled by Glu-138. Residues Ser-192, Ser-195, and Arg-207 each coordinate acetyl-CoA.

Belongs to the type II pantothenate kinase family. As to quaternary structure, homodimer.

It is found in the cytoplasm. The catalysed reaction is (R)-pantothenate + ATP = (R)-4'-phosphopantothenate + ADP + H(+). The protein operates within cofactor biosynthesis; coenzyme A biosynthesis; CoA from (R)-pantothenate: step 1/5. Subject to allosteric regulation, exists in two distinct conformational states, a catalytically incompetent (or open) conformation stabilized by the binding of acetyl(acyl)-CoA, and a catalytically competent (or closed) conformation stabilized by ATP-binding. Inhibited by acetyl-CoA and its thioesters which act as allosteric inhibitors and compete with the ATP-binding site. Catalyzes the phosphorylation of pantothenate to generate 4'-phosphopantothenate in the first and rate-determining step of coenzyme A (CoA) synthesis. The sequence is that of Pantothenate kinase 3 (PANK3) from Bos taurus (Bovine).